We begin with the raw amino-acid sequence, 628 residues long: Huntingtin-associated protein 1 (628 aa).

2 disordered regions span residues 1–62 (MRPK…TKTG) and 212–264 (YSDS…AHRC). Residues 32 to 44 (GPAPEPSAEPKPA) are compositionally biased toward pro residues. Residues 52 to 62 (GQKSGSRTKTG) show a composition bias toward polar residues. One can recognise an HAP1 N-terminal domain in the interval 79–403 (RYVFQGPYGP…EDGKSHRQRS (325 aa)). A sufficient for interaction with KIF5B region spans residues 152 to 319 (LLEEKERDLN…SEASQQMAEL (168 aa)). Positions 157-261 (ERDLNTAARI…PKPHPKAETA (105 aa)) are interaction with TBP. Coiled-coil stretches lie at residues 168-301 (QSLV…EQML) and 327-367 (LEGY…MLAS). Residues 214–235 (DSDDDDDEEDEEDEEEGEEEER) are compositionally biased toward acidic residues. Residues 236–248 (EGQRDQDQQHDHP) show a composition bias toward basic and acidic residues. The segment at 276-444 (LLEEENDHLR…TSLRKFITDP (169 aa)) is sufficient for self-association and interaction with HD. Disordered regions lie at residues 372–411 (HSES…GSVT), 451–529 (RDTH…VDET), and 562–628 (QDAH…SGAT). Composition is skewed to basic and acidic residues over residues 387–398 (SRPRDRQEDGKS) and 451–464 (RDTH…KEQR). Positions 473–582 (DLKPPEDFEA…KVVPKDSPTP (110 aa)) are interaction with TBP. Acidic residues-rich tracts occupy residues 479–494 (DFEA…ELGA) and 504–527 (GQAE…PEVD). Residue Arg598 is modified to Phosphothreonine. The span at 605-622 (QRLEEDRATHSPSAREEE) shows a compositional bias: basic and acidic residues.

Self-associates. Interacts with HTT/huntingtin; enhanced by an expanded polyglutamine repeat within HTT. Isoform A interacts with DCTN1; decreased in presence of HTT with expanded polyglutamine repeat; decreased by phosphorylation of Hap1 isoform A at Thr-598. Isoform A interacts with KLC2; decreased by phosphorylation of Hap1 isoform A at Thr-598. Isoform A interacts with ITPR1 and APP. Isoform A interacts with AR; decreased by an expanded polyglutamine repeat within AR. Isoform A interacts with YWHAZ; enhanced by phosphorylation of Hap1 isoform A at Thr-598. Isoform A interacts with BDNF and SORT1; probably forming a complex involved in proBDNF trafficking, degradation and processing. Interacts with TBP, AHI1, HGS and KALRN. Interacts with KIF5A, KIF5B, KIF5C and GABRB3; indicative for an HAP1:KIF5 complex transporting a GABA(A) receptor as cargo. Interacts with ATXN3; in STBs. Interacts with NTRK2; HAP1 stabilizes association of NTRK2 with SORT1 preventing NTRK2 degradation. Interacts with CFAP263. Isoform A is phosphorylated on Thr-598.

It is found in the cytoplasm. It localises to the presynapse. Its subcellular location is the cytoskeleton. The protein resides in the cell projection. The protein localises to the dendritic spine. It is found in the dendrite. It localises to the axon. Its subcellular location is the lysosome. The protein resides in the endoplasmic reticulum. The protein localises to the mitochondrion. It is found in the nucleus. It localises to the cytoplasmic vesicle. Its subcellular location is the autophagosome. The protein resides in the early endosome. The protein localises to the growth cone. It is found in the neuron projection. It localises to the secretory vesicle. Its subcellular location is the synaptic vesicle. In terms of biological role, originally identified as neuronal protein that specifically associates with HTT/huntingtin and the binding is enhanced by an expanded polyglutamine repeat within HTT possibly affecting HAP1 interaction properties. Both HTT and HAP1 are involved in intracellular trafficking and HAP1 is proposed to link HTT to motor proteins and/or transport cargos. Seems to play a role in vesicular transport within neurons and axons such as from early endosomes to late endocytic compartments and to promote neurite outgrowth. The vesicular transport function via association with microtubule-dependent transporters can be attenuated by association with mutant HTT. Involved in the axonal transport of BDNF and its activity-dependent secretion; the function seems to involve HTT, DCTN1 and a complex with SORT1. Involved in APP trafficking and seems to facilitate APP anterograde transport and membrane insertion thereby possibly reducing processing into amyloid beta. Involved in delivery of gamma-aminobutyric acid (GABA(A)) receptors to synapses; the function is dependent on kinesin motor protein KIF5 and is disrupted by HTT with expanded polyglutamine repeat. Involved in regulation of autophagosome motility by promoting efficient retrograde axonal transport. Seems to be involved in regulation of membrane receptor recycling and degradation, and respective signal transduction, including GABA(A) receptors, tyrosine kinase receptors, EGFR, IP3 receptor and androgen receptor. Among others suggested to be involved in control of feeding behavior (involving hypothalamic GABA(A) receptors), cerebellar and brainstem development (involving AHI1 and NTRK1/TrkA), postnatal neurogenesis (involving hypothalamic NTRK2/TrkB regulating the number of Npyr1-expressing cells), and ITPR1/InsP3R1-mediated Ca(2+) release (involving HTT and possibly the effect of mutant HTT). Via association with DCTN1/dynactin p150-glued and HTT/huntingtin involved in cytoplasmic retention of REST in neurons. May be involved in ciliogenesiss; however, reports are conflicting: PubMed:21985783 reports that Hap1 is required for ciliogenesis in primary cortical neurons and proposes that HTT interacts with PCM1 through HAP1; PubMed:23532844 reports that mice with disrupted Hap1 display normal cilium formation and function. Involved in regulation of exocytosis. Isoform A but not isoform B seems to be involved in formation of cytoplasmic inclusion bodies (STBs). In case of anomalous expression of TBP, can sequester a subset of TBP into STBs; sequestration is enhanced by an expanded polyglutamine repeat within TBP. The polypeptide is Huntingtin-associated protein 1 (Hap1) (Mus musculus (Mouse)).